Here is a 649-residue protein sequence, read N- to C-terminus: uncharacterized protein (649 aa).

It localises to the nucleus. It is found in the cytoplasm. This is an uncharacterized protein from Schizosaccharomyces pombe (strain 972 / ATCC 24843) (Fission yeast).